The sequence spans 214 residues: tRNA (guanine-N(7)-)-methyltransferase (214 aa).

Positions 44, 69, 96, and 118 each coordinate S-adenosyl-L-methionine. Aspartate 118 is an active-site residue. Lysine 122 is a substrate binding site. Residues 124 to 129 (RHEKRR) are interaction with RNA. Substrate contacts are provided by residues aspartate 154 and 192–195 (TEYE).

This sequence belongs to the class I-like SAM-binding methyltransferase superfamily. TrmB family.

It carries out the reaction guanosine(46) in tRNA + S-adenosyl-L-methionine = N(7)-methylguanosine(46) in tRNA + S-adenosyl-L-homocysteine. The protein operates within tRNA modification; N(7)-methylguanine-tRNA biosynthesis. Functionally, catalyzes the formation of N(7)-methylguanine at position 46 (m7G46) in tRNA. This chain is tRNA (guanine-N(7)-)-methyltransferase, found in Lactiplantibacillus plantarum (strain ATCC BAA-793 / NCIMB 8826 / WCFS1) (Lactobacillus plantarum).